Here is a 204-residue protein sequence, read N- to C-terminus: Peroxynitrite isomerase (204 aa).

The GXWXGXG signature appears at 21 to 27 (GEWEGSG). His-195 is a binding site for heme b.

Belongs to the nitrobindin family. As to quaternary structure, homodimer. Heme b is required as a cofactor.

It carries out the reaction peroxynitrite = nitrate. It participates in nitrogen metabolism. In terms of biological role, heme-binding protein able to scavenge peroxynitrite and to protect free L-tyrosine against peroxynitrite-mediated nitration, by acting as a peroxynitrite isomerase that converts peroxynitrite to nitrate. Therefore, this protein likely plays a role in peroxynitrite sensing and in the detoxification of reactive nitrogen and oxygen species (RNS and ROS, respectively). Is able to bind nitric oxide (NO) in vitro, but may act as a sensor of peroxynitrite levels in vivo. The chain is Peroxynitrite isomerase from Arthrobacter sp. (strain FB24).